The following is a 430-amino-acid chain: Asparagine--tRNA ligase (430 aa).

The protein belongs to the class-II aminoacyl-tRNA synthetase family. Homodimer.

It is found in the cytoplasm. It catalyses the reaction tRNA(Asn) + L-asparagine + ATP = L-asparaginyl-tRNA(Asn) + AMP + diphosphate + H(+). The polypeptide is Asparagine--tRNA ligase (Staphylococcus epidermidis (strain ATCC 35984 / DSM 28319 / BCRC 17069 / CCUG 31568 / BM 3577 / RP62A)).